We begin with the raw amino-acid sequence, 119 residues long: Basic phospholipase A2 taipoxin alpha chain (119 aa).

7 disulfide bridges follow: cysteine 11/cysteine 72, cysteine 27/cysteine 118, cysteine 29/cysteine 45, cysteine 44/cysteine 99, cysteine 51/cysteine 92, cysteine 61/cysteine 85, and cysteine 79/cysteine 90. Positions 28, 30, and 32 each coordinate Ca(2+). Histidine 48 is a catalytic residue. Aspartate 49 lines the Ca(2+) pocket. Aspartate 93 is an active-site residue.

Belongs to the phospholipase A2 family. Group I subfamily. D49 sub-subfamily. Heterotrimer of alpha, beta, and gamma chains; non-covalently linked. Ca(2+) is required as a cofactor. Expressed by the venom gland.

The protein resides in the secreted. The catalysed reaction is a 1,2-diacyl-sn-glycero-3-phosphocholine + H2O = a 1-acyl-sn-glycero-3-phosphocholine + a fatty acid + H(+). In terms of biological role, heterotrimer: Snake venom phospholipase A2 (PLA2) heterotrimer that acts as a potent presynaptic neurotoxin by blocking synaptic transmission and synaptic vesicle recycling. May act by binding in a calcium-dependent fashion to neurotonal pentraxin-1 (NPTX1) and neurotonal pentraxin-2 (NPTX2), but not to neuronal pentraxin receptor (NPTXR). Also binds to taipoxin-associated calcium binding protein 49 (RCN2), a protein localized in the lumen of endoplasmic reticulum. Functionally, monomer (alpha chain): Snake venom phospholipase A2 (PLA2) alpha chain that possesses the same high enzymatic activity as the heterotrimer. PLA2 catalyzes the calcium-dependent hydrolysis of the 2-acyl groups in 3-sn-phosphoglycerides. This Oxyuranus scutellatus scutellatus (Australian taipan) protein is Basic phospholipase A2 taipoxin alpha chain.